The sequence spans 193 residues: Imidazoleglycerol-phosphate dehydratase (193 aa).

The protein belongs to the imidazoleglycerol-phosphate dehydratase family.

The protein resides in the cytoplasm. It carries out the reaction D-erythro-1-(imidazol-4-yl)glycerol 3-phosphate = 3-(imidazol-4-yl)-2-oxopropyl phosphate + H2O. The protein operates within amino-acid biosynthesis; L-histidine biosynthesis; L-histidine from 5-phospho-alpha-D-ribose 1-diphosphate: step 6/9. The polypeptide is Imidazoleglycerol-phosphate dehydratase (Sulfolobus acidocaldarius (strain ATCC 33909 / DSM 639 / JCM 8929 / NBRC 15157 / NCIMB 11770)).